Reading from the N-terminus, the 204-residue chain is Recombination protein RecR (204 aa).

The segment at 59–74 adopts a C4-type zinc-finger fold; that stretch reads CTRCNTFTELEICGTC. The region spanning 82–181 is the Toprim domain; the sequence is TLLCVVETPA…KVSRLARGVP (100 aa).

The protein belongs to the RecR family.

Functionally, may play a role in DNA repair. It seems to be involved in an RecBC-independent recombinational process of DNA repair. It may act with RecF and RecO. The polypeptide is Recombination protein RecR (Cupriavidus metallidurans (strain ATCC 43123 / DSM 2839 / NBRC 102507 / CH34) (Ralstonia metallidurans)).